The following is a 775-amino-acid chain: 1,4-alpha-glucan branching enzyme GlgB (775 aa).

Asp431 functions as the Nucleophile in the catalytic mechanism. Glu484 acts as the Proton donor in catalysis.

It belongs to the glycosyl hydrolase 13 family. GlgB subfamily. As to quaternary structure, monomer.

The catalysed reaction is Transfers a segment of a (1-&gt;4)-alpha-D-glucan chain to a primary hydroxy group in a similar glucan chain.. Its pathway is glycan biosynthesis; glycogen biosynthesis. In terms of biological role, catalyzes the formation of the alpha-1,6-glucosidic linkages in glycogen by scission of a 1,4-alpha-linked oligosaccharide from growing alpha-1,4-glucan chains and the subsequent attachment of the oligosaccharide to the alpha-1,6 position. The protein is 1,4-alpha-glucan branching enzyme GlgB of Parasynechococcus marenigrum (strain WH8102).